The sequence spans 308 residues: U-box domain-containing protein 54 (308 aa).

Residues 172–235 (FSEFSTSAEK…NESDEDPRLE (64 aa)) are disordered. Residues 210 to 227 (ESPKKGRKETIEKSKSNE) are compositionally biased toward basic and acidic residues. In terms of domain architecture, U-box spans 232-306 (PRLEDFKCPI…KDWLEKNPNY (75 aa)).

The catalysed reaction is S-ubiquitinyl-[E2 ubiquitin-conjugating enzyme]-L-cysteine + [acceptor protein]-L-lysine = [E2 ubiquitin-conjugating enzyme]-L-cysteine + N(6)-ubiquitinyl-[acceptor protein]-L-lysine.. It functions in the pathway protein modification; protein ubiquitination. Functionally, functions as an E3 ubiquitin ligase. This Arabidopsis thaliana (Mouse-ear cress) protein is U-box domain-containing protein 54 (PUB54).